We begin with the raw amino-acid sequence, 190 residues long: Xanthine phosphoribosyltransferase (190 aa).

Positions 20 and 27 each coordinate xanthine. Residue 128 to 132 (ANGNA) participates in 5-phospho-alpha-D-ribose 1-diphosphate binding. A xanthine-binding site is contributed by Lys-156.

This sequence belongs to the purine/pyrimidine phosphoribosyltransferase family. Xpt subfamily. Homodimer.

The protein resides in the cytoplasm. It catalyses the reaction XMP + diphosphate = xanthine + 5-phospho-alpha-D-ribose 1-diphosphate. It functions in the pathway purine metabolism; XMP biosynthesis via salvage pathway; XMP from xanthine: step 1/1. Functionally, converts the preformed base xanthine, a product of nucleic acid breakdown, to xanthosine 5'-monophosphate (XMP), so it can be reused for RNA or DNA synthesis. In Clostridium novyi (strain NT), this protein is Xanthine phosphoribosyltransferase.